A 140-amino-acid chain; its full sequence is Protein NrdI (140 aa).

Belongs to the NrdI family.

Functionally, probably involved in ribonucleotide reductase function. In Photorhabdus laumondii subsp. laumondii (strain DSM 15139 / CIP 105565 / TT01) (Photorhabdus luminescens subsp. laumondii), this protein is Protein NrdI.